The chain runs to 246 residues: Phycobilisome rod-core linker polypeptide CpcG2 (246 aa).

The region spanning 11 to 189 (SSQNQRVAGY…YWRDKLENSR (179 aa)) is the PBS-linker domain. The disordered stretch occupies residues 224–246 (DTTRRDRPTVPASINPTASFPLR). Residues 235–246 (ASINPTASFPLR) are compositionally biased toward polar residues.

Belongs to the phycobilisome linker protein family. In terms of assembly, the phycobilisome is a hemidiscoidal structure that is composed of two distinct substructures: a core complex and a number of rods radiating from the core.

It localises to the cellular thylakoid membrane. Its function is as follows. Rod-core linker protein required for attachment of phycocyanin to allophycocyanin in cores of phycobilisomes. Linker polypeptides determine the state of aggregation and the location of the disk-shaped phycobiliprotein units within the phycobilisome and modulate their spectroscopic properties in order to mediate a directed and optimal energy transfer. The protein is Phycobilisome rod-core linker polypeptide CpcG2 (cpcG2) of Thermosynechococcus vestitus (strain NIES-2133 / IAM M-273 / BP-1).